We begin with the raw amino-acid sequence, 188 residues long: Photosystem I assembly protein Ycf4 (188 aa).

Helical transmembrane passes span 26 to 48 (FFWA…SSYF) and 63 to 85 (FIPQ…GYLW).

The protein belongs to the Ycf4 family.

The protein resides in the cellular thylakoid membrane. Its function is as follows. Seems to be required for the assembly of the photosystem I complex. The polypeptide is Photosystem I assembly protein Ycf4 (Synechocystis sp. (strain ATCC 27184 / PCC 6803 / Kazusa)).